Reading from the N-terminus, the 561-residue chain is Dihydroxy-acid dehydratase (561 aa).

C50 contacts [2Fe-2S] cluster. Residue D82 participates in Mg(2+) binding. A [2Fe-2S] cluster-binding site is contributed by C123. Mg(2+)-binding residues include D124 and K125. N6-carboxylysine is present on K125. C195 is a [2Fe-2S] cluster binding site. E447 lines the Mg(2+) pocket. Residue S473 is the Proton acceptor of the active site.

It belongs to the IlvD/Edd family. Homodimer. Requires [2Fe-2S] cluster as cofactor. The cofactor is Mg(2+).

The catalysed reaction is (2R)-2,3-dihydroxy-3-methylbutanoate = 3-methyl-2-oxobutanoate + H2O. It carries out the reaction (2R,3R)-2,3-dihydroxy-3-methylpentanoate = (S)-3-methyl-2-oxopentanoate + H2O. Its pathway is amino-acid biosynthesis; L-isoleucine biosynthesis; L-isoleucine from 2-oxobutanoate: step 3/4. It functions in the pathway amino-acid biosynthesis; L-valine biosynthesis; L-valine from pyruvate: step 3/4. Functionally, functions in the biosynthesis of branched-chain amino acids. Catalyzes the dehydration of (2R,3R)-2,3-dihydroxy-3-methylpentanoate (2,3-dihydroxy-3-methylvalerate) into 2-oxo-3-methylpentanoate (2-oxo-3-methylvalerate) and of (2R)-2,3-dihydroxy-3-methylbutanoate (2,3-dihydroxyisovalerate) into 2-oxo-3-methylbutanoate (2-oxoisovalerate), the penultimate precursor to L-isoleucine and L-valine, respectively. In Crocosphaera subtropica (strain ATCC 51142 / BH68) (Cyanothece sp. (strain ATCC 51142)), this protein is Dihydroxy-acid dehydratase.